The following is a 419-amino-acid chain: Glutamyl-tRNA reductase (419 aa).

Substrate contacts are provided by residues 49-52, Ser107, 112-114, and Gln118; these read TCNR and EPQ. The active-site Nucleophile is the Cys50. 187-192 is a binding site for NADP(+); it reads GAGETI.

Belongs to the glutamyl-tRNA reductase family. As to quaternary structure, homodimer.

It carries out the reaction (S)-4-amino-5-oxopentanoate + tRNA(Glu) + NADP(+) = L-glutamyl-tRNA(Glu) + NADPH + H(+). It functions in the pathway porphyrin-containing compound metabolism; protoporphyrin-IX biosynthesis; 5-aminolevulinate from L-glutamyl-tRNA(Glu): step 1/2. In terms of biological role, catalyzes the NADPH-dependent reduction of glutamyl-tRNA(Glu) to glutamate 1-semialdehyde (GSA). The polypeptide is Glutamyl-tRNA reductase (Vibrio vulnificus (strain CMCP6)).